The following is a 1269-amino-acid chain: Clustered mitochondria protein homolog (1269 aa).

Positions P297–V552 constitute a Clu domain. The span at E958–A969 shows a compositional bias: basic and acidic residues. Positions E958 to E989 are disordered. TPR repeat units follow at residues V1020 to C1053 and G1147 to E1180. A disordered region spans residues L1211 to N1269. Residues S1213–I1223 are compositionally biased toward polar residues. Over residues S1258–N1269 the composition is skewed to basic residues.

This sequence belongs to the CLU family. As to quaternary structure, may associate with the eukaryotic translation initiation factor 3 (eIF-3) complex.

Its subcellular location is the cytoplasm. MRNA-binding protein involved in proper cytoplasmic distribution of mitochondria. The polypeptide is Clustered mitochondria protein homolog (Kluyveromyces lactis (strain ATCC 8585 / CBS 2359 / DSM 70799 / NBRC 1267 / NRRL Y-1140 / WM37) (Yeast)).